Consider the following 125-residue polypeptide: MAGSSLACCLLGLLALTSACYIQNCPLGGKRAVLDLDVRTCLPCGPGGKGRCFGPSICCGDELGCFVGTAEALRCREENYLPSPCQSGQKPCGSGGRCAAAGICCSPDGCHADPACDPEAAFSQH.

Residues 1-19 (MAGSSLACCLLGLLALTSA) form the signal peptide. A disulfide bond links cysteine 20 and cysteine 25. Glycine 28 carries the glycine amide modification. 7 cysteine pairs are disulfide-bonded: cysteine 41–cysteine 85, cysteine 44–cysteine 58, cysteine 52–cysteine 75, cysteine 59–cysteine 65, cysteine 92–cysteine 104, cysteine 98–cysteine 116, and cysteine 105–cysteine 110.

It belongs to the vasopressin/oxytocin family. In terms of assembly, interacts with oxytocin receptor (Ki=1.5 nM). Interacts with vasopressin V1aR/AVPR1A (Ki=37 nM), V1bR/AVPR1B (Ki=222 nM), and V2R/AVPR2 receptors (Ki=823 nM).

Its function is as follows. Neurophysin 1 specifically binds oxytocin. In terms of biological role, oxytocin causes contraction of the smooth muscle of the uterus and of the mammary gland. Acts by binding to oxytocin receptor (OXTR). This chain is Oxytocin-neurophysin 1 (OXT), found in Ovis aries (Sheep).